Here is an 89-residue protein sequence, read N- to C-terminus: MTLNTEAKQKIINKHQTHGTDTGSVEVQVAMLSERINQLSKHLQSNNHDFSSRQGLLKMIGQRKRLLNYVKKQSESRYSSLVTKLGIRG.

Residues 1 to 23 (MTLNTEAKQKIINKHQTHGTDTG) are disordered.

The protein belongs to the universal ribosomal protein uS15 family. As to quaternary structure, part of the 30S ribosomal subunit. Forms a bridge to the 50S subunit in the 70S ribosome, contacting the 23S rRNA.

Functionally, one of the primary rRNA binding proteins, it binds directly to 16S rRNA where it helps nucleate assembly of the platform of the 30S subunit by binding and bridging several RNA helices of the 16S rRNA. Forms an intersubunit bridge (bridge B4) with the 23S rRNA of the 50S subunit in the ribosome. The sequence is that of Small ribosomal subunit protein uS15 from Prochlorococcus marinus (strain SARG / CCMP1375 / SS120).